The primary structure comprises 553 residues: Threonylcarbamoyladenosine tRNA methylthiotransferase (553 aa).

Residues 21–61 form a disordered region; the sequence is SAEDVKPQERYQNKKSVTVRAKKRVQIKPETDAEEKPTPRP. Composition is skewed to basic and acidic residues over residues 23–32 and 47–58; these read EDVKPQERYQ and IKPETDAEEKPT. In terms of domain architecture, MTTase N-terminal spans 72–179; the sequence is QKVFVKTWGC…VVEVVEETLK (108 aa). Cys-81, Cys-116, Cys-145, Cys-221, Cys-225, and Cys-228 together coordinate [4Fe-4S] cluster. The region spanning 207–438 is the Radical SAM core domain; sequence RKNPLIEIIS…DLFYSYEPYA (232 aa). Residues 438-500 form the TRAM domain; sequence AQRVGEMYTV…KFSMVGEILD (63 aa). The helical transmembrane segment at 533–553 threads the bilayer; the sequence is VGIALVVGSLAFLLQLLIRFL.

This sequence belongs to the methylthiotransferase family. CDKAL1 subfamily. [4Fe-4S] cluster is required as a cofactor.

Its subcellular location is the membrane. It carries out the reaction N(6)-L-threonylcarbamoyladenosine(37) in tRNA + (sulfur carrier)-SH + AH2 + 2 S-adenosyl-L-methionine = 2-methylsulfanyl-N(6)-L-threonylcarbamoyladenosine(37) in tRNA + (sulfur carrier)-H + 5'-deoxyadenosine + L-methionine + A + S-adenosyl-L-homocysteine + 2 H(+). Its function is as follows. Catalyzes the methylthiolation of N6-threonylcarbamoyladenosine (t(6)A), leading to the formation of 2-methylthio-N6-threonylcarbamoyladenosine (ms(2)t(6)A) at position 37 in tRNAs that read codons beginning with adenine. The chain is Threonylcarbamoyladenosine tRNA methylthiotransferase from Drosophila pseudoobscura pseudoobscura (Fruit fly).